Reading from the N-terminus, the 436-residue chain is Chromosomal replication initiator protein DnaA (436 aa).

The domain I, interacts with DnaA modulators stretch occupies residues 1-69 (MSIFTKIKKS…SELYEKETGI (69 aa)). A domain II region spans residues 69-97 (IKPKIDIVTKEISHRPLTIEEIIEPTTPS). Positions 98 to 311 (VLIPEYTFES…GMITKINAMS (214 aa)) are domain III, AAA+ region. ATP is bound by residues Gly142, Gly144, Lys145, and Thr146. A domain IV, binds dsDNA region spans residues 312–436 (KILGISEITL…KNKIQIKKSE (125 aa)).

This sequence belongs to the DnaA family. Oligomerizes as a right-handed, spiral filament on DNA at oriC.

It is found in the cytoplasm. Its function is as follows. Plays an essential role in the initiation and regulation of chromosomal replication. ATP-DnaA binds to the origin of replication (oriC) to initiate formation of the DNA replication initiation complex once per cell cycle. Binds the DnaA box (a 9 base pair repeat at the origin) and separates the double-stranded (ds)DNA. Forms a right-handed helical filament on oriC DNA; dsDNA binds to the exterior of the filament while single-stranded (ss)DNA is stabiized in the filament's interior. The ATP-DnaA-oriC complex binds and stabilizes one strand of the AT-rich DNA unwinding element (DUE), permitting loading of DNA polymerase. After initiation quickly degrades to an ADP-DnaA complex that is not apt for DNA replication. Binds acidic phospholipids. The protein is Chromosomal replication initiator protein DnaA of Nautilia profundicola (strain ATCC BAA-1463 / DSM 18972 / AmH).